The sequence spans 1078 residues: Teashirt homolog 1-A (1078 aa).

Disordered stretches follow at residues Met1–Tyr110, Lys140–Ala197, and Gly271–Glu300. Acidic residues predominate over residues Ile26–Leu36. Residues Pro57–Asp71 show a composition bias toward polar residues. Low complexity predominate over residues Glu143–Ala197. C2H2-type zinc fingers lie at residues Phe248–His272 and Leu309–His333. The segment covering Gly271 to Lys286 has biased composition (basic and acidic residues). Residues Asp365 to Pro394 form a disordered region. The C2H2-type 3 zinc finger occupies Leu418–His442. Disordered regions lie at residues Leu472–Asp524 and Arg850–Asp877. Over residues His497–Asp524 the composition is skewed to basic and acidic residues. The segment covering Pro853–Ser862 has biased composition (polar residues). Residues Arg885–Gly955 constitute a DNA-binding region (homeobox). C2H2-type zinc fingers lie at residues Phe970–His992 and Phe1038–His1061.

The protein belongs to the teashirt C2H2-type zinc-finger protein family.

It localises to the nucleus. In terms of biological role, probable transcriptional regulator involved in developmental processes. May act as a transcriptional repressor (Potential). Involved in two major neuronal regionalization processes: primary anteroposterior (AP) axis patterning of the CNS and segmentation of the cranial neuronal crest (CNS) development. The chain is Teashirt homolog 1-A (tshz1-a) from Xenopus laevis (African clawed frog).